Reading from the N-terminus, the 731-residue chain is Putative beta-galactosidase (731 aa).

The signal sequence occupies residues 1–29 (MLCGKENNVMKMMLVYVFVLITLISCVYG). Residue Glu187 is the Proton donor of the active site. The active-site Nucleophile is Glu257.

Belongs to the glycosyl hydrolase 35 family. As to expression, senescing flower petals.

The enzyme catalyses Hydrolysis of terminal non-reducing beta-D-galactose residues in beta-D-galactosides.. The sequence is that of Putative beta-galactosidase (CARSR12) from Dianthus caryophyllus (Carnation).